Here is a 788-residue protein sequence, read N- to C-terminus: E3 ubiquitin-protein ligase SspH2 (788 aa).

Positions 1–481 (MPFHIGSGCL…PGYSGPIIRF (481 aa)) are interaction with host membrane and with target proteins. LRR repeat units lie at residues 223–242 (HITT…ALPP), 243–264 (ELRT…PPGL), 265–282 (LELS…ALPS), 283–302 (GLCK…VLPP), 303–324 (GLQE…PSEL), 325–342 (CKLW…MLPS), 343–364 (GLQE…PSEL), 365–382 (YKLW…ALPS), 383–404 (GLKE…PSEL), 405–422 (KELM…MLPS), 423–445 (GLLS…IHLS), and 446–466 (SETT…QALR). The interval 482–491 (DMAGASAPRE) is linker. Positions 492-788 (TRALHLAAAD…SYLNVQWRRN (297 aa)) are E3 ubiquitin-protein ligase catalytic domain. The NEL domain occupies 494-788 (ALHLAAADWL…SYLNVQWRRN (295 aa)). The active-site Glycyl thioester intermediate is the C580.

The protein belongs to the LRR-containing bacterial E3 ligase family. Post-translationally, ubiquitinated in the presence of host E1 ubiquitin-activating enzyme UBA1, E2 ubiquitin-conjugating enzyme UBE2D2 and ubiquitin.

Its subcellular location is the secreted. It is found in the host cytoplasm. It localises to the host apical cell membrane. It catalyses the reaction S-ubiquitinyl-[E2 ubiquitin-conjugating enzyme]-L-cysteine + [acceptor protein]-L-lysine = [E2 ubiquitin-conjugating enzyme]-L-cysteine + N(6)-ubiquitinyl-[acceptor protein]-L-lysine.. Exists in an autoinhibited state in the absence of substrate protein, due to interactions of the leucine-rich repeat domain with the catalytic domain. Is activated upon binding to a substrate protein. Its function is as follows. Effector proteins function to alter host cell physiology and promote bacterial survival in host tissues. This protein is an E3 ubiquitin ligase that interferes with host's ubiquitination pathway. The polypeptide is E3 ubiquitin-protein ligase SspH2 (sspH2) (Salmonella typhimurium (strain LT2 / SGSC1412 / ATCC 700720)).